Reading from the N-terminus, the 351-residue chain is C(7)-cyclitol 7-kinase (351 aa).

The protein belongs to the ROK (NagC/XylR) family.

The catalysed reaction is valienone + ATP = valienone 7-phosphate + ADP + H(+). The enzyme catalyses validone + ATP = validone 7-phosphate + ADP + H(+). Functionally, involved in the biosynthesis of the antifungal agent validamycin A. Catalyzes the phosphorylation of valienone and validone to their 7-phosphate derivatives. The protein is C(7)-cyclitol 7-kinase of Streptomyces hygroscopicus subsp. jinggangensis (strain 5008).